Here is a 457-residue protein sequence, read N- to C-terminus: Acetylcholine receptor subunit alpha (457 aa).

Positions 1–20 (MEPWPLLLLFSLCSAGLVLG) are cleaved as a signal peptide. Residues 21–232 (SEHETRLVAK…YHFVMQRLPL (212 aa)) are Extracellular-facing. 2 cysteine pairs are disulfide-bonded: C148–C162 and C212–C213. N161 carries an N-linked (GlcNAc...) asparagine glycan. A helical membrane pass occupies residues 233–253 (YFIVNVIIPCLLFSFLTGLVF). Over 254 to 264 (YLPTDSGEKMT) the chain is Cytoplasmic. The chain crosses the membrane as a helical span at residues 265–285 (LSISVLLSLTVFLLVIVELIP). The Extracellular portion of the chain corresponds to 286-296 (STSSAVPLIGK). A helical membrane pass occupies residues 297-317 (YMLFTMVFVIASIIITVIVIN). The Cytoplasmic portion of the chain corresponds to 318–427 (THHRSPSTHV…EWKYVAMVMD (110 aa)). The helical transmembrane segment at 428 to 448 (HILLGVFMLVCIIGTLAVFAG) threads the bilayer. The Extracellular segment spans residues 449 to 457 (RLIELNQQG).

This sequence belongs to the ligand-gated ion channel (TC 1.A.9) family. Acetylcholine receptor (TC 1.A.9.1) subfamily. Alpha-1/CHRNA1 sub-subfamily. One of the alpha chains that assemble within the acetylcholine receptor, a pentamer of two alpha chains, a beta, a delta, and a gamma (in immature muscle) or epsilon (in mature muscle) chains. The muscle heteropentamer composed of alpha-1, beta-1, delta, epsilon subunits interacts with the alpha-conotoxin ImII. In terms of assembly, is able to interact with other subunits of the acetylcholine receptor but is not assembled into functional acetylcholine-gated cation-selective channels. Isoform 1 is only expressed in skeletal muscle. Isoform 2 is constitutively expressed in skeletal muscle, brain, heart, kidney, liver, lung and thymus.

It is found in the postsynaptic cell membrane. Its subcellular location is the cell membrane. It carries out the reaction K(+)(in) = K(+)(out). The catalysed reaction is Na(+)(in) = Na(+)(out). Its function is as follows. Upon acetylcholine binding, the AChR responds by an extensive change in conformation that affects all subunits and leads to opening of an ion-conducting channel across the plasma membrane. Functionally, non functional acetylcholine receptor alpha subunit which is not integrated into functional acetylcholine-gated cation-selective channels. The protein is Acetylcholine receptor subunit alpha of Homo sapiens (Human).